The following is a 335-amino-acid chain: Acetyl-coenzyme A carboxylase carboxyl transferase subunit alpha (335 aa).

Positions Thr-48–Ala-308 constitute a CoA carboxyltransferase C-terminal domain.

It belongs to the AccA family. Acetyl-CoA carboxylase is a heterohexamer composed of biotin carboxyl carrier protein (AccB), biotin carboxylase (AccC) and two subunits each of ACCase subunit alpha (AccA) and ACCase subunit beta (AccD).

Its subcellular location is the cytoplasm. The catalysed reaction is N(6)-carboxybiotinyl-L-lysyl-[protein] + acetyl-CoA = N(6)-biotinyl-L-lysyl-[protein] + malonyl-CoA. It functions in the pathway lipid metabolism; malonyl-CoA biosynthesis; malonyl-CoA from acetyl-CoA: step 1/1. Component of the acetyl coenzyme A carboxylase (ACC) complex. First, biotin carboxylase catalyzes the carboxylation of biotin on its carrier protein (BCCP) and then the CO(2) group is transferred by the carboxyltransferase to acetyl-CoA to form malonyl-CoA. The protein is Acetyl-coenzyme A carboxylase carboxyl transferase subunit alpha of Pelodictyon phaeoclathratiforme (strain DSM 5477 / BU-1).